The chain runs to 205 residues: Protein phosphatase inhibitor 2 family member C (205 aa).

2 disordered regions span residues 1–51 (MSAS…DESS) and 70–114 (EPGT…DHSC). Residues 12-17 (KGILKN) form a required for binding PPP1CC region. The segment covering 19–34 (SSSGSSVATSGQQSGG) has biased composition (low complexity). Positions 43–55 (KSQKWDESSILAT) are required for binding PPP1CC. A compositionally biased stretch (basic and acidic residues) spans 84 to 102 (DSVRDVEGEDSVRGVEGKE). Residues 147–150 (HYNE) are required for binding PPP1CC catalytic center, displacing metal ions and inhibition of PPP1CC catalytic activity. A disordered region spans residues 165-205 (LQSEDDENEERPQATNEEKTAAEESEEAPLSGGLQTQSCDP). Basic and acidic residues predominate over residues 174–186 (ERPQATNEEKTAA).

Belongs to the protein phosphatase inhibitor 2 family.

Functionally, functions as a protein phosphatase inhibitor. It inhibits activity of the catalytic subunit of PP1 and weakly inhibits the activity of myosin-associated phosphates. This chain is Protein phosphatase inhibitor 2 family member C (PPP1R2C), found in Macaca fascicularis (Crab-eating macaque).